A 141-amino-acid polypeptide reads, in one-letter code: Lutropin subunit beta (141 aa).

The signal sequence occupies residues 1 to 21 (MERYQELTVLLLLLLLEGGSG). 6 cysteine pairs are disulfide-bonded: Cys-30-Cys-78, Cys-44-Cys-93, Cys-47-Cys-131, Cys-55-Cys-109, Cys-59-Cys-111, and Cys-114-Cys-121. Asn-34 carries N-linked (GlcNAc...) asparagine glycosylation.

Belongs to the glycoprotein hormones subunit beta family. Heterodimer of a common alpha chain and a unique beta chain which confers biological specificity to thyrotropin, lutropin, follitropin and gonadotropin.

It localises to the secreted. Promotes spermatogenesis and ovulation by stimulating the testes and ovaries to synthesize steroids. The chain is Lutropin subunit beta (LHB) from Monodelphis domestica (Gray short-tailed opossum).